A 180-amino-acid polypeptide reads, in one-letter code: MLKFLSEIGPVIAFFAGFFYGGGIQHATLYMLITSVICITLCYVIDKKVSKLSIISTTVLLVSGSITLISGDSMYIKIKPTILYVIFGIIFLMSGIRKNPFIKYALESIVRLKEESWITLSYRTAAFFFFMAVVNEVVWRNCSDETWVKFKVFGVIPITFIFILLQLPLLLKNKLPDSKI.

The next 6 membrane-spanning stretches (helical) occupy residues 4–24, 25–45, 49–69, 76–96, 118–138, and 150–170; these read FLSEIGPVIAFFAGFFYGGGI, QHATLYMLITSVICITLCYVI, VSKLSIISTTVLLVSGSITLI, IKIKPTILYVIFGIIFLMSGI, ITLSYRTAAFFFFMAVVNEVV, and FKVFGVIPITFIFILLQLPLL.

It belongs to the YciB family.

It localises to the cell inner membrane. Plays a role in cell envelope biogenesis, maintenance of cell envelope integrity and membrane homeostasis. In Rickettsia rickettsii (strain Iowa), this protein is Inner membrane-spanning protein YciB.